The sequence spans 159 residues: Cyclic pyranopterin monophosphate synthase (159 aa).

Residues 76-78 (LCH) and 114-115 (ME) each bind substrate. The active site involves D129.

Belongs to the MoaC family. Homohexamer; trimer of dimers.

The enzyme catalyses (8S)-3',8-cyclo-7,8-dihydroguanosine 5'-triphosphate = cyclic pyranopterin phosphate + diphosphate. It participates in cofactor biosynthesis; molybdopterin biosynthesis. Its function is as follows. Catalyzes the conversion of (8S)-3',8-cyclo-7,8-dihydroguanosine 5'-triphosphate to cyclic pyranopterin monophosphate (cPMP). This Psychromonas ingrahamii (strain DSM 17664 / CCUG 51855 / 37) protein is Cyclic pyranopterin monophosphate synthase.